Consider the following 289-residue polypeptide: Protoheme IX farnesyltransferase (289 aa).

Helical transmembrane passes span Val18–Pro38, Gly40–Phe60, Val87–Val107, Leu111–Phe131, Asn139–Gly159, Ser168–Leu188, Ser212–Ser232, Met234–Tyr254, and Phe269–Ile289.

The protein belongs to the UbiA prenyltransferase family. Protoheme IX farnesyltransferase subfamily.

Its subcellular location is the cell inner membrane. It carries out the reaction heme b + (2E,6E)-farnesyl diphosphate + H2O = Fe(II)-heme o + diphosphate. Its pathway is porphyrin-containing compound metabolism; heme O biosynthesis; heme O from protoheme: step 1/1. Converts heme B (protoheme IX) to heme O by substitution of the vinyl group on carbon 2 of heme B porphyrin ring with a hydroxyethyl farnesyl side group. This is Protoheme IX farnesyltransferase from Leptospira interrogans serogroup Icterohaemorrhagiae serovar copenhageni (strain Fiocruz L1-130).